The sequence spans 92 residues: Muconolactone Delta-isomerase (92 aa).

Belongs to the muconolactone Delta-isomerase family. In terms of assembly, homodecamer.

It catalyses the reaction (S)-muconolactone = (4,5-dihydro-5-oxofuran-2-yl)-acetate. It functions in the pathway aromatic compound metabolism; beta-ketoadipate pathway; 5-oxo-4,5-dihydro-2-furylacetate from catechol: step 3/3. This is Muconolactone Delta-isomerase (catC) from Cupriavidus pinatubonensis (strain JMP 134 / LMG 1197) (Cupriavidus necator (strain JMP 134)).